The chain runs to 217 residues: Adenylate kinase (217 aa).

10–15 (GAGKGT) serves as a coordination point for ATP. An NMP region spans residues 30–59 (STGDIFRKNISDKTPLGIEAKEYLDKGQLV). AMP is bound by residues threonine 31, arginine 36, 57 to 59 (QLV), 85 to 88 (GFPR), and glutamine 92. The LID stretch occupies residues 126-163 (GRRICPSCGASYHVKFNPPKLKDKCDICNNDIIQRKDD). Residue arginine 127 participates in ATP binding. 2 residues coordinate Zn(2+): cysteine 130 and cysteine 133. ATP is bound at residue 136–137 (SY). The Zn(2+) site is built by cysteine 150 and cysteine 153. 2 residues coordinate AMP: arginine 160 and arginine 171. Glycine 199 is a binding site for ATP.

It belongs to the adenylate kinase family. In terms of assembly, monomer.

The protein resides in the cytoplasm. The catalysed reaction is AMP + ATP = 2 ADP. It functions in the pathway purine metabolism; AMP biosynthesis via salvage pathway; AMP from ADP: step 1/1. Functionally, catalyzes the reversible transfer of the terminal phosphate group between ATP and AMP. Plays an important role in cellular energy homeostasis and in adenine nucleotide metabolism. The chain is Adenylate kinase from Clostridium kluyveri (strain NBRC 12016).